The primary structure comprises 331 residues: ADP-L-glycero-D-manno-heptose-6-epimerase (331 aa).

Residues 11 to 12 (FI), 32 to 33 (DN), K39, K54, 75 to 79 (EGACS), and N92 each bind NADP(+). The active-site Proton acceptor is the Y139. Residue K143 coordinates NADP(+). Position 168 (N168) interacts with substrate. Residues V169 and K177 each contribute to the NADP(+) site. K177 (proton acceptor) is an active-site residue. Substrate is bound by residues R179, H186, 200-203 (FGEY), R213, and Y292.

This sequence belongs to the NAD(P)-dependent epimerase/dehydratase family. HldD subfamily. In terms of assembly, homopentamer. Requires NADP(+) as cofactor.

It catalyses the reaction ADP-D-glycero-beta-D-manno-heptose = ADP-L-glycero-beta-D-manno-heptose. It functions in the pathway nucleotide-sugar biosynthesis; ADP-L-glycero-beta-D-manno-heptose biosynthesis; ADP-L-glycero-beta-D-manno-heptose from D-glycero-beta-D-manno-heptose 7-phosphate: step 4/4. In terms of biological role, catalyzes the interconversion between ADP-D-glycero-beta-D-manno-heptose and ADP-L-glycero-beta-D-manno-heptose via an epimerization at carbon 6 of the heptose. This is ADP-L-glycero-D-manno-heptose-6-epimerase from Cupriavidus necator (strain ATCC 17699 / DSM 428 / KCTC 22496 / NCIMB 10442 / H16 / Stanier 337) (Ralstonia eutropha).